Reading from the N-terminus, the 20-residue chain is Fibrinogen beta chain (20 aa).

The residue at position 5 (Tyr-5) is a Sulfotyrosine.

In terms of assembly, heterohexamer; disulfide linked. Contains 2 sets of 3 non-identical chains (alpha, beta and gamma). The 2 heterotrimers are in head to head conformation with the N-termini in a small central domain. Post-translationally, conversion of fibrinogen to fibrin is triggered by thrombin, which cleaves fibrinopeptides A and B from alpha and beta chains, and thus exposes the N-terminal polymerization sites responsible for the formation of the soft clot.

The protein localises to the secreted. In terms of biological role, cleaved by the protease thrombin to yield monomers which, together with fibrinogen alpha (FGA) and fibrinogen gamma (FGG), polymerize to form an insoluble fibrin matrix. Fibrin has a major function in hemostasis as one of the primary components of blood clots. In addition, functions during the early stages of wound repair to stabilize the lesion and guide cell migration during re-epithelialization. Was originally thought to be essential for platelet aggregation, based on in vitro studies using anticoagulated blood. However subsequent studies have shown that it is not absolutely required for thrombus formation in vivo. Enhances expression of SELP in activated platelets. Maternal fibrinogen is essential for successful pregnancy. Fibrin deposition is also associated with infection, where it protects against IFNG-mediated hemorrhage. May also facilitate the antibacterial immune response via both innate and T-cell mediated pathways. This is Fibrinogen beta chain (FGB) from Capra hircus (Goat).